The primary structure comprises 617 residues: BPI fold-containing family B member 4 (617 aa).

Residues 1-17 (MWTAWCVAALSVAAVCG) form the signal peptide. The segment at 124–149 (RPSDSAYHRGPGRYRSAADPSSAGRL) is disordered. N-linked (GlcNAc...) asparagine glycosylation occurs at Asn275. Cysteines 297 and 334 form a disulfide.

It belongs to the BPI/LBP/Plunc superfamily. BPI/LBP family. Highly expressed in olfactory mucosa but undetectable in thymus, kidney, lung, brain, spleen and liver.

It localises to the secreted. It is found in the cytoplasm. In terms of biological role, may have the capacity to recognize and bind specific classes of odorants. May act as a carrier molecule, transporting odorants across the mucus layer to access receptor sites. May serve as a primary defense mechanism by recognizing and removing potentially harmful odorants or pathogenic microorganisms from the mucosa or clearing excess odorant from mucus to enable new odorant stimuli to be received. The polypeptide is BPI fold-containing family B member 4 (Bpifb4) (Rattus norvegicus (Rat)).